Here is a 182-residue protein sequence, read N- to C-terminus: UPF0149 protein CGSHiEE_07975 (182 aa).

The protein belongs to the UPF0149 family.

This Haemophilus influenzae (strain PittEE) protein is UPF0149 protein CGSHiEE_07975.